A 524-amino-acid polypeptide reads, in one-letter code: Translation initiation factor eIF2B subunit delta (524 aa).

The segment at 1 to 173 is disordered; the sequence is MATAAVAVRE…ERQQVPTRKD (173 aa). Position 2 is an N-acetylalanine (alanine 2). Serine 12 bears the Phosphoserine mark. Residues 26-40 show a composition bias toward basic and acidic residues; sequence AEGREMTQEEKLQLR. Residues 41 to 51 are compositionally biased toward basic residues; sequence KEKKQQKKKRK. At threonine 86 the chain carries Phosphothreonine. 2 stretches are compositionally biased toward basic and acidic residues: residues 87–121 and 161–173; these read AKEK…RKGD and KKPE…TRKD. Positions 171–180 are may bind the chemical integrated stress response (ISR) inhibitor ISRIB; the sequence is RKDYGSKVSL.

Belongs to the eIF-2B alpha/beta/delta subunits family. As to quaternary structure, component of the translation initiation factor 2B (eIF2B) complex which is a heterodecamer of two sets of five different subunits: alpha, beta, gamma, delta and epsilon. Subunits alpha, beta and delta comprise a regulatory subcomplex and subunits epsilon and gamma comprise a catalytic subcomplex. Within the complex, the hexameric regulatory complex resides at the center, with the two heterodimeric catalytic subcomplexes bound on opposite sides.

It localises to the cytoplasm. Its subcellular location is the cytosol. Its activity is regulated as follows. Activated by the chemical integrated stress response (ISR) inhibitor ISRIB which stimulates guanine nucleotide exchange factor activity for both phosphorylated and unphosphorylated eIF2. Its function is as follows. Acts as a component of the translation initiation factor 2B (eIF2B) complex, which catalyzes the exchange of GDP for GTP on eukaryotic initiation factor 2 (eIF2) gamma subunit. Its guanine nucleotide exchange factor activity is repressed when bound to eIF2 complex phosphorylated on the alpha subunit, thereby limiting the amount of methionyl-initiator methionine tRNA available to the ribosome and consequently global translation is repressed. This is Translation initiation factor eIF2B subunit delta (EIF2B4) from Bos taurus (Bovine).